We begin with the raw amino-acid sequence, 204 residues long: tRNA (pseudouridine(54)-N(1))-methyltransferase (204 aa).

S-adenosyl-L-methionine is bound by residues L130, G157, 180–185 (LSPLEL), and C190.

The protein belongs to the methyltransferase superfamily. TrmY family. In terms of assembly, homodimer.

The protein localises to the cytoplasm. The enzyme catalyses pseudouridine(54) in tRNA + S-adenosyl-L-methionine = N(1)-methylpseudouridine(54) in tRNA + S-adenosyl-L-homocysteine + H(+). Specifically catalyzes the N1-methylation of pseudouridine at position 54 (Psi54) in tRNAs. This chain is tRNA (pseudouridine(54)-N(1))-methyltransferase, found in Methanococcus aeolicus (strain ATCC BAA-1280 / DSM 17508 / OCM 812 / Nankai-3).